The following is a 520-amino-acid chain: MAVWTRATKAGLVELLLRERWVRVVAELSGESLSLTGDAAAVEPEPPAAAFNGLPNGGGGESLPGSPNRGLGPPSPPAPPRGPAGEASASPPVRRVRVVKQEAGGLGISIKGGRENRMPILISKIFPGLAADQSRALRLGDAILSVNGTDLRQATHDQAVQALKRAGKEVLLEVKFIREVTPYIKKPSLVSDLPWEGASPQSPSFSGSEDSGSPKHQNTTKDRKVIPLKMCFAARNLSMPDLENRLIELHSPDSRNTLILRCKDTATAHSWFVAIHTNIMALLPQVLAELNAMLGATSTAGGSKEVKHIAWLAEQAKLDGGRQQWRPVLMAVTEKDLLLYDCMPWTRDAWASPCHSYPLVATRLVHSGSGCRSPSLGSDLTFATRTGSRQGIEMHLFRVETHRDLSTWTRILVQGCHAAAELIKEVSLGCTLSGQEVRFTVHYEHGFTITRDNGGASSILYRYPFERLKMSADDGIRNLYLDFGGPEGELTMDLHSCPKPIVFVLHTFLSAKVTRMGLLV.

Residues 45-95 (EPPAAAFNGLPNGGGGESLPGSPNRGLGPPSPPAPPRGPAGEASASPPVRR) form a disordered region. Positions 63-72 (LPGSPNRGLG) are enriched in low complexity. Over residues 73-82 (PPSPPAPPRG) the composition is skewed to pro residues. Phosphoserine is present on residues S75, S90, S109, S191, S202, S213, S373, and S375. Low complexity predominate over residues 83 to 93 (PAGEASASPPV). The PDZ domain maps to 95-178 (RVRVVKQEAG…EVLLEVKFIR (84 aa)). PH domains lie at 143–280 (ILSV…TNIM) and 305–417 (EVKH…QGCH). Residues 195-220 (WEGASPQSPSFSGSEDSGSPKHQNTT) are disordered. Positions 197–211 (GASPQSPSFSGSEDS) are enriched in low complexity. The region spanning 464-520 (PFERLKMSADDGIRNLYLDFGGPEGELTMDLHSCPKPIVFVLHTFLSAKVTRMGLLV) is the SU domain. The calmodulin-binding stretch occupies residues 498–520 (PKPIVFVLHTFLSAKVTRMGLLV).

This sequence belongs to the syntrophin family. As to quaternary structure, monomer and homodimer. Interacts with the dystrophin protein DMD and related protein DTNA; and with the other members of the syntrophin family: SNTA1 and SNTB1. Interacts with the neuroregulin receptor ERBB4. Interacts with PTPRN when phosphorylated, protecting PTPRN from protein cleavage by CAPN1. Dephosphorylation upon insulin stimulation disrupts the interaction with PTPRN and results in the cleavage of PTPRN. Interacts with the sodium channel proteins SCN4A and SCN5A. Interacts with SAST, MAST205, microtubules and microtubule-associated proteins. Interacts with the dystrophin related protein UTRN. Interacts with DTNB. Phosphorylated. Partially dephosphorylated upon insulin stimulation. Ubiquitous. Expressed at high levels in the testis.

The protein localises to the membrane. It localises to the cytoplasmic vesicle. The protein resides in the secretory vesicle membrane. Its subcellular location is the cell junction. It is found in the cytoplasm. The protein localises to the cytoskeleton. Adapter protein that binds to and probably organizes the subcellular localization of a variety of membrane proteins. May link various receptors to the actin cytoskeleton and the dystrophin glycoprotein complex. May play a role in the regulation of secretory granules via its interaction with PTPRN. This Mus musculus (Mouse) protein is Beta-2-syntrophin (Sntb2).